The following is a 502-amino-acid chain: MSYFPWLTILVVLPIFAGSLIFFLPHRGNKIVRWYTISICLLEFLLMTYAFCYHFQLEDPLIQLKEDYKWIDIFDFHWRLGIDGLSLGSILLTGFITTLATLAAWPVTRNSRLFYFLMLAMYSGQIGLFSSRDLLLFFIMWELELIPVYLLLSMWGGKRRLYSATKFILYTAGGSIFFLIGVLGMGLYGYGSNELGLDLERLINQSYPATLEILLYFGFLIAYAVKLPIIPLHTWLPDTHGEAHYSTCMLLAGILLKMGAYGLIRINMELLPHAHYLFSPWLVIIGAIQIIYAASTSLGQRNFKKRIAYSSISHMGFIIIGIGSITNIGLNGAILQILSHGFIGATLFFLAGTASDRMRLVYLEELGGISIPMPKIFTMFSSFSMASLALPGMSGFVAELVVFFGLITSPKFLLMPKMLITFVMAIGMILTPIYLLSMLRQMFYGYKLFNVPNANFVDSGPRELFILICIFLPVIGIGIYPDFVLSLSIDRVEALVSNYYPK.

14 helical membrane-spanning segments follow: residues Phe-4 to Leu-24, Ile-37 to Leu-57, Leu-87 to Val-107, Leu-113 to Ser-130, Leu-134 to Met-154, Phe-167 to Leu-187, Ile-213 to His-233, His-244 to Ile-264, Ala-274 to Ala-294, Met-315 to Leu-335, Gln-336 to Asp-356, Leu-388 to Thr-408, Leu-419 to Leu-439, and Leu-464 to Val-484.

This sequence belongs to the complex I subunit 4 family.

It localises to the plastid. Its subcellular location is the chloroplast thylakoid membrane. The enzyme catalyses a plastoquinone + NADH + (n+1) H(+)(in) = a plastoquinol + NAD(+) + n H(+)(out). It catalyses the reaction a plastoquinone + NADPH + (n+1) H(+)(in) = a plastoquinol + NADP(+) + n H(+)(out). This is NAD(P)H-quinone oxidoreductase chain 4, chloroplastic from Lolium perenne (Perennial ryegrass).